Reading from the N-terminus, the 617-residue chain is RNA polymerase sigma factor RpoD (617 aa).

The tract at residues 192–222 (NITNDSNENEDENEDENEDEDENSIDPELAN) is disordered. Residues 198–216 (NENEDENEDENEDEDENSI) are compositionally biased toward acidic residues. The sigma-70 factor domain-2 stretch occupies residues 383–453 (MVEANLRLVI…TRSIADQART (71 aa)). Residues 407–410 (DLIQ) carry the Interaction with polymerase core subunit RpoC motif. Positions 462–538 (ETINKLNRIS…DTTLELPLDS (77 aa)) are sigma-70 factor domain-3. The tract at residues 551-604 (VLSGLTAREAKVLRMRFGIDMNTDHTLEEVGKQFDVTRERIRQIEAKALRKLRH) is sigma-70 factor domain-4. The segment at residues 577 to 596 (LEEVGKQFDVTRERIRQIEA) is a DNA-binding region (H-T-H motif).

The protein belongs to the sigma-70 factor family. RpoD/SigA subfamily. Interacts transiently with the RNA polymerase catalytic core.

It localises to the cytoplasm. In terms of biological role, sigma factors are initiation factors that promote the attachment of RNA polymerase to specific initiation sites and are then released. This sigma factor is the primary sigma factor during exponential growth. The polypeptide is RNA polymerase sigma factor RpoD (Buchnera aphidicola subsp. Schizaphis graminum (strain Sg)).